We begin with the raw amino-acid sequence, 105 residues long: Heat shock protein HspQ (105 aa).

Positions 75–105 (SELQDEHPEQPSMDELAQTIRKQLQAPRLRN) are disordered.

Belongs to the HspQ family.

It localises to the cytoplasm. In terms of biological role, involved in the degradation of certain denaturated proteins, including DnaA, during heat shock stress. The chain is Heat shock protein HspQ from Escherichia coli O127:H6 (strain E2348/69 / EPEC).